Here is a 689-residue protein sequence, read N- to C-terminus: Elongation factor G (689 aa).

In terms of domain architecture, tr-type G spans Ala-9–Leu-283. GTP-binding positions include Ala-18–Thr-25, Asp-82–His-86, and Asn-136–Asp-139.

Belongs to the TRAFAC class translation factor GTPase superfamily. Classic translation factor GTPase family. EF-G/EF-2 subfamily.

It is found in the cytoplasm. Catalyzes the GTP-dependent ribosomal translocation step during translation elongation. During this step, the ribosome changes from the pre-translocational (PRE) to the post-translocational (POST) state as the newly formed A-site-bound peptidyl-tRNA and P-site-bound deacylated tRNA move to the P and E sites, respectively. Catalyzes the coordinated movement of the two tRNA molecules, the mRNA and conformational changes in the ribosome. This Clostridium botulinum (strain Kyoto / Type A2) protein is Elongation factor G.